Here is a 269-residue protein sequence, read N- to C-terminus: Eukaryotic translation initiation factor 3 subunit G-1 (269 aa).

The RRM domain occupies A188 to P266.

Belongs to the eIF-3 subunit G family. Component of the eukaryotic translation initiation factor 3 (eIF-3) complex. The eIF-3 complex interacts with pix.

It localises to the cytoplasm. RNA-binding component of the eukaryotic translation initiation factor 3 (eIF-3) complex, which is involved in protein synthesis of a specialized repertoire of mRNAs and, together with other initiation factors, stimulates binding of mRNA and methionyl-tRNAi to the 40S ribosome. The eIF-3 complex specifically targets and initiates translation of a subset of mRNAs involved in cell proliferation. This subunit can bind 18S rRNA. In Drosophila erecta (Fruit fly), this protein is Eukaryotic translation initiation factor 3 subunit G-1.